Reading from the N-terminus, the 300-residue chain is Cation-efflux pump FieF (300 aa).

A helical membrane pass occupies residues 24–44 (LLIKIFAWWYTGSVSILAALV). Zn(2+) is bound by residues Asp-45 and Asp-49. Helical transmembrane passes span 82–102 (AALA…LTSI) and 114–134 (PGVG…LVTF). Residues His-153 and Asp-157 each coordinate Zn(2+). Transmembrane regions (helical) follow at residues 156-176 (SDVM…YGWH) and 178-198 (ADAL…LRMG).

Belongs to the cation diffusion facilitator (CDF) transporter (TC 2.A.4) family. FieF subfamily. Homodimer.

It is found in the cell inner membrane. The catalysed reaction is Zn(2+)(in) + H(+)(out) = Zn(2+)(out) + H(+)(in). The enzyme catalyses Cd(2+)(in) + H(+)(out) = Cd(2+)(out) + H(+)(in). It catalyses the reaction Fe(2+)(in) + H(+)(out) = Fe(2+)(out) + H(+)(in). Its function is as follows. Divalent metal cation transporter which exports Zn(2+), Cd(2+) and possibly Fe(2+). May be involved in zinc and iron detoxification by efflux. In Salmonella choleraesuis (strain SC-B67), this protein is Cation-efflux pump FieF.